Here is a 410-residue protein sequence, read N- to C-terminus: Histidine--tRNA ligase (410 aa).

The protein belongs to the class-II aminoacyl-tRNA synthetase family.

The protein resides in the cytoplasm. It catalyses the reaction tRNA(His) + L-histidine + ATP = L-histidyl-tRNA(His) + AMP + diphosphate + H(+). The protein is Histidine--tRNA ligase of Methanoculleus marisnigri (strain ATCC 35101 / DSM 1498 / JR1).